The sequence spans 292 residues: MNIVLKLSSNACQQLSEKYKSYEQTSKNPYIRFFAKVGKTSISVYTSGKVVFQGSDAEKIASEFGHVAQVVPKKQTNLIGTDEVGNGSYFGGLMVTASFVSDNHLKFLKEMGVADSKKLTDEKICQIAPKLIEEIPHVALVVEPEKYNEVIASGYNAVSIKVALHNQAIYLLEKQLGSQPESIVIDAFTTEANYKKYVSAEKNHPLTNVTLLTKAEDQFLAVAVSSIISRYKFLENLKKLSKESSFTLPSGAENLSDKVAAQIIKSQGIDALNHLAKLHFANTQKAMKIAQL.

In terms of domain architecture, RNase H type-2 spans 76-292 (TNLIGTDEVG…TQKAMKIAQL (217 aa)). Residues Asp-82, Glu-83, and Asp-186 each coordinate a divalent metal cation.

This sequence belongs to the RNase HII family. RnhC subfamily. The cofactor is Mn(2+). Mg(2+) is required as a cofactor.

The protein localises to the cytoplasm. It catalyses the reaction Endonucleolytic cleavage to 5'-phosphomonoester.. Functionally, endonuclease that specifically degrades the RNA of RNA-DNA hybrids. The chain is Ribonuclease HIII from Lactococcus lactis subsp. cremoris (strain SK11).